The chain runs to 239 residues: Lectin (239 aa).

N-linked (GlcNAc...) asparagine glycosylation is found at Asn-17 and Asn-113.

This sequence belongs to the leguminous lectin family. Homodimer.

Galactose and N-acetyllactosamine specific lectin. This chain is Lectin, found in Erythrina crista-galli (Cockspur coral tree).